The following is a 283-amino-acid chain: tRNA (guanine-N(1)-)-methyltransferase (283 aa).

Residues G113 and 133 to 138 (IGDYVL) each bind S-adenosyl-L-methionine.

Belongs to the RNA methyltransferase TrmD family. Homodimer.

The protein resides in the cytoplasm. The enzyme catalyses guanosine(37) in tRNA + S-adenosyl-L-methionine = N(1)-methylguanosine(37) in tRNA + S-adenosyl-L-homocysteine + H(+). Specifically methylates guanosine-37 in various tRNAs. The polypeptide is tRNA (guanine-N(1)-)-methyltransferase (Parafrankia sp. (strain EAN1pec)).